The following is a 463-amino-acid chain: Glutamate--tRNA ligase (463 aa).

A 'HIGH' region motif is present at residues Pro9–Gly19. A compositionally biased stretch (basic and acidic residues) spans Ala115–Ala129. The segment at Ala115 to Ile136 is disordered. Residues Lys241–Arg245 carry the 'KMSKS' region motif. Lys244 lines the ATP pocket.

The protein belongs to the class-I aminoacyl-tRNA synthetase family. Glutamate--tRNA ligase type 1 subfamily. In terms of assembly, monomer.

Its subcellular location is the cytoplasm. The enzyme catalyses tRNA(Glu) + L-glutamate + ATP = L-glutamyl-tRNA(Glu) + AMP + diphosphate. Functionally, catalyzes the attachment of glutamate to tRNA(Glu) in a two-step reaction: glutamate is first activated by ATP to form Glu-AMP and then transferred to the acceptor end of tRNA(Glu). The chain is Glutamate--tRNA ligase from Janthinobacterium sp. (strain Marseille) (Minibacterium massiliensis).